A 324-amino-acid chain; its full sequence is Glyoxylate/hydroxypyruvate reductase B (324 aa).

Catalysis depends on residues Arg237 and Glu266. Residue His285 is the Proton donor of the active site.

Belongs to the D-isomer specific 2-hydroxyacid dehydrogenase family. GhrB subfamily. In terms of assembly, homodimer.

The protein resides in the cytoplasm. It carries out the reaction glycolate + NADP(+) = glyoxylate + NADPH + H(+). The enzyme catalyses (R)-glycerate + NAD(+) = 3-hydroxypyruvate + NADH + H(+). It catalyses the reaction (R)-glycerate + NADP(+) = 3-hydroxypyruvate + NADPH + H(+). Its function is as follows. Catalyzes the NADPH-dependent reduction of glyoxylate and hydroxypyruvate into glycolate and glycerate, respectively. This chain is Glyoxylate/hydroxypyruvate reductase B, found in Salmonella paratyphi B (strain ATCC BAA-1250 / SPB7).